A 314-amino-acid chain; its full sequence is Calcium homeostasis modulator protein 4 (314 aa).

Residues 1-14 (MCPTLNNIVSSLQR) lie on the Cytoplasmic side of the membrane. Residues 15–37 (NGIFINSLIAALTIGGQQLFSSS) traverse the membrane as a helical segment. Over 38–48 (TFSCPCQVGKN) the chain is Extracellular. Cystine bridges form between C41–C131 and C43–C162. Residues 49–71 (FYYGSAFLVIPALILLVAGFALR) form a helical membrane-spanning segment. The Cytoplasmic segment spans residues 72–103 (SQMWTITGEYCCSCAPPYRRISPLECKLACLR). Residues 104–129 (FFSITGRAVIAPLTWLAVTLLTGTYY) traverse the membrane as a helical segment. At 130–183 (ECAASEFASVDHYPMFDNVSASKREEILAGFPCCRSAPSDVILVRDEIALLHRY) the chain is on the extracellular side. The helical transmembrane segment at 184–207 (QSQMLGWILITLATIAALVSCCVA) threads the bilayer. The Cytoplasmic segment spans residues 208 to 314 (KCCSPLTSLQ…DRSRGIELKP (107 aa)).

This sequence belongs to the CALHM family. In terms of assembly, oligomerizes to form decameric and undecameric channels. Two hemichannels can assemble in a tail-to-tail manner to form a gap junction. As to expression, placenta.

Its subcellular location is the cell membrane. In terms of biological role, may assemble to form gap junction channel-like structures involved in intercellular communication. Channel gating and ion conductance are likely regulated by membrane lipids rather than by membrane depolarization or extracellular calcium levels. The chain is Calcium homeostasis modulator protein 4 from Homo sapiens (Human).